The following is a 953-amino-acid chain: Coatomer subunit beta (953 aa).

Thr2 is modified (N-acetylthreonine). HEAT repeat units follow at residues 96–131, 132–168, 240–276, 277–314, 316–353, and 396–433; these read HEMI…KEAE, LLEP…NFEH, SERA…SAPT, AIKA…HPAH, RVLQ…SRNV, and DMAA…RFDN. Lys494 carries the post-translational modification N6-acetyllysine.

Oligomeric complex that consists of at least the alpha, beta, beta', gamma, delta, epsilon and zeta subunits. Interacts with CAPN8 and PRKCE. Interacts with SCYL1. Interacts with COPG1. Interacts with ARF1 (myristoylated); this interaction is required for binding of COPB1 to Golgi membranes. Interacts (via trunk domain) with ARF1 (via switch I region); the interaction is direct. Interacts with KCNK2 (via N-terminus); this interaction increases the channel-mediated whole cell currents and promotes plasma membrane expression of KCNK2. Interacts with STX17. Interacts with TMEM115. Interacts with TMEM41B. High expression in the lung, kidney, skeletal muscle and small intestine, and lower level of expression in heart, liver, spleen, stomach and fat.

It localises to the cytoplasm. Its subcellular location is the golgi apparatus membrane. The protein resides in the cytoplasmic vesicle. It is found in the COPI-coated vesicle membrane. The protein localises to the cell membrane. It localises to the endoplasmic reticulum-Golgi intermediate compartment. The coatomer is a cytosolic protein complex that binds to dilysine motifs and reversibly associates with Golgi non-clathrin-coated vesicles, which further mediate biosynthetic protein transport from the ER, via the Golgi up to the trans Golgi network. Coatomer complex is required for budding from Golgi membranes, and is essential for the retrograde Golgi-to-ER transport of dilysine-tagged proteins. In mammals, the coatomer can only be recruited by membranes associated to ADP-ribosylation factors (ARFs), which are small GTP-binding proteins; the complex also influences the Golgi structural integrity, as well as the processing, activity, and endocytic recycling of LDL receptors. Plays a functional role in facilitating the transport of kappa-type opioid receptor mRNAs into axons and enhances translation of these proteins. Required for limiting lipid storage in lipid droplets. Involved in lipid homeostasis by regulating the presence of perilipin family members PLIN2 and PLIN3 at the lipid droplet surface and promoting the association of adipocyte surface triglyceride lipase (PNPLA2) with the lipid droplet to mediate lipolysis. Involved in the Golgi disassembly and reassembly processes during cell cycle. Involved in autophagy by playing a role in early endosome function. Plays a role in organellar compartmentalization of secretory compartments including endoplasmic reticulum (ER)-Golgi intermediate compartment (ERGIC), Golgi, trans-Golgi network (TGN) and recycling endosomes, and in biosynthetic transport of CAV1. This is Coatomer subunit beta from Sus scrofa (Pig).